The following is a 594-amino-acid chain: Frizzled and smoothened-like protein A (594 aa).

The signal sequence occupies residues 1 to 22 (MVDIRKSLFFIIFFIFYNYVNS). The Extracellular portion of the chain corresponds to 23 to 248 (QKAINSDAFC…NEWYQFKDLT (226 aa)). The FZ domain maps to 27-173 (NSDAFCQKKT…SNYDLQCLNI (147 aa)). 2 disulfides stabilise this stretch: Cys32–Cys98 and Cys41–Cys91. Residues Asn55 and Asn106 are each glycosylated (N-linked (GlcNAc...) asparagine). Cys117 and Cys170 are disulfide-bonded. 4 N-linked (GlcNAc...) asparagine glycosylation sites follow: Asn182, Asn189, Asn195, and Asn206. The chain crosses the membrane as a helical span at residues 249-269 (TVTGVISFVCIFFNIFIYGFL). The Cytoplasmic segment spans residues 270–277 (NKKHDRHT). Residues 278 to 298 (IGILCLSFSLWCCMLSDLIVA) form a helical membrane-spanning segment. Topologically, residues 299-329 (SSPDYSLVCPEPGRFARIHDSRCVANGIIFQ) are extracellular. The helical transmembrane segment at 330 to 350 (WGAVCTTMFWSAMAIDLYLVI) threads the bilayer. The Cytoplasmic segment spans residues 351 to 361 (KKLSLPAFTVK). A helical transmembrane segment spans residues 362–382 (YFVAAIFTLALLFTTVPLAWD). The Extracellular segment spans residues 383 to 403 (DYGYGFGGVGCWIMSNSVQNG). A helical membrane pass occupies residues 404–424 (CFWIPMLICLLIGAVSICLII). The Cytoplasmic portion of the chain corresponds to 425–448 (YEIVKVFKNVGRSGISIILANARL). The helical transmembrane segment at 449 to 469 (FGIVSFIFIEYIYLFVYHFWV) threads the bilayer. At 470–507 (QENTEKFTQNITDWVICVQTTGSSDGCPLPKAVPYATQ) the chain is on the extracellular side. Residue Asn479 is glycosylated (N-linked (GlcNAc...) asparagine). The helical transmembrane segment at 508–528 (FIFLFFLRLLGIEVCIFYGIN) threads the bilayer. Residues 529 to 594 (SRSKNIILES…SKNGGDDDDL (66 aa)) lie on the Cytoplasmic side of the membrane.

It belongs to the G-protein coupled receptor Fz/Smo family.

It localises to the membrane. This Dictyostelium discoideum (Social amoeba) protein is Frizzled and smoothened-like protein A (fslA).